We begin with the raw amino-acid sequence, 470 residues long: 6-phospho-beta-galactosidase (470 aa).

D-galactose 6-phosphate-binding residues include glutamine 19, histidine 116, asparagine 159, glutamate 160, and asparagine 297. Catalysis depends on glutamate 160, which acts as the Proton donor. Catalysis depends on glutamate 375, which acts as the Nucleophile. 4 residues coordinate D-galactose 6-phosphate: serine 430, tryptophan 431, lysine 437, and tyrosine 439.

This sequence belongs to the glycosyl hydrolase 1 family.

The enzyme catalyses a 6-phospho-beta-D-galactoside + H2O = D-galactose 6-phosphate + an alcohol. The protein operates within carbohydrate metabolism; lactose degradation; D-galactose 6-phosphate and beta-D-glucose from lactose 6-phosphate: step 1/1. The polypeptide is 6-phospho-beta-galactosidase (Staphylococcus aureus (strain Mu3 / ATCC 700698)).